Consider the following 388-residue polypeptide: MNSTDVTKGFTEQFGKQAEHTFFAPGRINLIGEHTDYNGGHVFPCAISLGTYAAVGTNEDNAFRLYSANFPKVGIIDIPFSDLFQDKRGLWTDYFQGMARVMKTAGANFTHGLNVYINGNLPDGAGLSSSASLEMLVGTILNNLFDGGFEPLELVQFGVKVENDYIGVNSGVMDQFAIEMGRANQATLLDTNTMKYEYLPVEMGDNVIVIMNTNKRRELADSKYNERRSECEKALAMLQKGIEVKSLGQLSEDEFDENTYLIYDPILIKRARHAVFENQRTLKASKALQDGDLKTFGKLVSASGVSLAFDYEVTGIELDTLVTNALKQRGVLGARMTGAGFGGCAIAIVNSADVEDFIDNVGKAYREKIGYDAHFYVADIADGARQLN.

33 to 36 contributes to the substrate binding site; that stretch reads EHTD. Residues Ser67 and 124–130 contribute to the ATP site; that span reads GAGLSSS. Residues Ser130 and Glu162 each coordinate Mg(2+). Asp174 acts as the Proton acceptor in catalysis. Position 224 (Tyr224) interacts with substrate.

The protein belongs to the GHMP kinase family. GalK subfamily.

It localises to the cytoplasm. The enzyme catalyses alpha-D-galactose + ATP = alpha-D-galactose 1-phosphate + ADP + H(+). The protein operates within carbohydrate metabolism; galactose metabolism. In terms of biological role, catalyzes the transfer of the gamma-phosphate of ATP to D-galactose to form alpha-D-galactose-1-phosphate (Gal-1-P). This is Galactokinase from Lacticaseibacillus paracasei (strain ATCC 334 / BCRC 17002 / CCUG 31169 / CIP 107868 / KCTC 3260 / NRRL B-441) (Lactobacillus paracasei).